We begin with the raw amino-acid sequence, 405 residues long: Amino sugar nitrososynthase DnmZ (405 aa).

DTDP-binding residues include E117 and R332.

Belongs to the acyl-CoA dehydrogenase family. As to quaternary structure, homotetramer. The cofactor is FAD.

Its pathway is antibiotic biosynthesis. Its function is as follows. Nitrososynthase involved in the biosynthesis of baumycin. Catalyzes the double-oxidation of TDP-L-epi-vancosamine to TDP-L-epi-vancosonitrose. The rapid turnover of TDP-L-epi-vancosamine suggests that this compound, or a closely related analog, is the natural substrate for DnmZ. Can also catalyze the double-oxidation of TDP-L-evernosamine to TDP-L-evernitrosose. The polypeptide is Amino sugar nitrososynthase DnmZ (Streptomyces peucetius).